A 362-amino-acid polypeptide reads, in one-letter code: Phenylalanine--tRNA ligase alpha subunit (362 aa).

E263 contacts Mg(2+).

It belongs to the class-II aminoacyl-tRNA synthetase family. Phe-tRNA synthetase alpha subunit type 1 subfamily. In terms of assembly, tetramer of two alpha and two beta subunits. Mg(2+) serves as cofactor.

The protein localises to the cytoplasm. The catalysed reaction is tRNA(Phe) + L-phenylalanine + ATP = L-phenylalanyl-tRNA(Phe) + AMP + diphosphate + H(+). This Caulobacter sp. (strain K31) protein is Phenylalanine--tRNA ligase alpha subunit.